We begin with the raw amino-acid sequence, 270 residues long: Sec-independent protein translocase protein TatC (270 aa).

6 helical membrane-spanning segments follow: residues 25–45 (FIAVGVGFVIAYCFKERLFDI), 75–95 (VSLLTGVILATPVLFYEFWMF), 111–131 (VVILSIFFFCVGSSFGYFIVF), 156–176 (LGFASKMLLAFGFVFELPLVL), 195–211 (KYAILIFFTGAALITPP), and 213–233 (VVTQIMMAIPLMILYEISIIG). The disordered stretch occupies residues 243-270 (SDEEEAAENSDVQTDKSTDDTTPGEDQN).

This sequence belongs to the TatC family. As to quaternary structure, the Tat system comprises two distinct complexes: a TatABC complex, containing multiple copies of TatA, TatB and TatC subunits, and a separate TatA complex, containing only TatA subunits. Substrates initially bind to the TatABC complex, which probably triggers association of the separate TatA complex to form the active translocon.

The protein localises to the cell inner membrane. Its function is as follows. Part of the twin-arginine translocation (Tat) system that transports large folded proteins containing a characteristic twin-arginine motif in their signal peptide across membranes. Together with TatB, TatC is part of a receptor directly interacting with Tat signal peptides. The chain is Sec-independent protein translocase protein TatC from Desulforapulum autotrophicum (strain ATCC 43914 / DSM 3382 / VKM B-1955 / HRM2) (Desulfobacterium autotrophicum).